The following is a 153-amino-acid chain: S-ribosylhomocysteine lyase (153 aa).

Fe cation-binding residues include His-57, His-61, and Cys-124.

It belongs to the LuxS family. In terms of assembly, homodimer. Fe cation is required as a cofactor.

The catalysed reaction is S-(5-deoxy-D-ribos-5-yl)-L-homocysteine = (S)-4,5-dihydroxypentane-2,3-dione + L-homocysteine. Involved in the synthesis of autoinducer 2 (AI-2) which is secreted by bacteria and is used to communicate both the cell density and the metabolic potential of the environment. The regulation of gene expression in response to changes in cell density is called quorum sensing. Catalyzes the transformation of S-ribosylhomocysteine (RHC) to homocysteine (HC) and 4,5-dihydroxy-2,3-pentadione (DPD). This Oceanobacillus iheyensis (strain DSM 14371 / CIP 107618 / JCM 11309 / KCTC 3954 / HTE831) protein is S-ribosylhomocysteine lyase.